A 326-amino-acid polypeptide reads, in one-letter code: uncharacterized protein (326 aa).

This sequence belongs to the ParB family.

This is an uncharacterized protein from Acidianus two-tailed virus (ATV).